The chain runs to 212 residues: 3-isopropylmalate dehydratase small subunit (212 aa).

The protein belongs to the LeuD family. LeuD type 1 subfamily. As to quaternary structure, heterodimer of LeuC and LeuD.

It carries out the reaction (2R,3S)-3-isopropylmalate = (2S)-2-isopropylmalate. Its pathway is amino-acid biosynthesis; L-leucine biosynthesis; L-leucine from 3-methyl-2-oxobutanoate: step 2/4. Its function is as follows. Catalyzes the isomerization between 2-isopropylmalate and 3-isopropylmalate, via the formation of 2-isopropylmaleate. The chain is 3-isopropylmalate dehydratase small subunit from Laribacter hongkongensis (strain HLHK9).